A 387-amino-acid chain; its full sequence is Alpha-sarcoglycan (387 aa).

A signal peptide spans 1–24 (MAAAALLWLPLLVGCLAGPGGTEA). The Extracellular segment spans residues 25–290 (QQTTLYPLVG…ATARDFLADA (266 aa)). N-linked (GlcNAc...) asparagine glycosylation is found at asparagine 174 and asparagine 246. The helical transmembrane segment at 291 to 311 (LVTLLVPLLVALLLALLLAYI) threads the bilayer. Residues 312-387 (MCCRREGRLK…AQVPLILDQH (76 aa)) lie on the Cytoplasmic side of the membrane. The residue at position 377 (serine 377) is a Phosphoserine.

The protein belongs to the sarcoglycan alpha/epsilon family. As to quaternary structure, cross-link to form 2 major subcomplexes: one consisting of SGCB, SGCD and SGCG and the other consisting of SGCB and SGCD. The association between SGCB and SGCG is particularly strong while SGCA is loosely associated with the other sarcoglycans. Interacts with the syntrophin SNTA1.

The protein localises to the cell membrane. It localises to the sarcolemma. Its subcellular location is the cytoplasm. It is found in the cytoskeleton. In terms of biological role, component of the sarcoglycan complex, a subcomplex of the dystrophin-glycoprotein complex which forms a link between the F-actin cytoskeleton and the extracellular matrix. The polypeptide is Alpha-sarcoglycan (SGCA) (Oryctolagus cuniculus (Rabbit)).